Consider the following 175-residue polypeptide: Probable chemoreceptor glutamine deamidase CheD (175 aa).

It belongs to the CheD family.

The catalysed reaction is L-glutaminyl-[protein] + H2O = L-glutamyl-[protein] + NH4(+). Functionally, probably deamidates glutamine residues to glutamate on methyl-accepting chemotaxis receptors (MCPs), playing an important role in chemotaxis. The polypeptide is Probable chemoreceptor glutamine deamidase CheD (Jannaschia sp. (strain CCS1)).